We begin with the raw amino-acid sequence, 329 residues long: CDP-6-deoxy-L-threo-D-glycero-4-hexulose-3-dehydrase reductase (329 aa).

In terms of domain architecture, 2Fe-2S ferredoxin-type spans 2–93 (SLNVKLHPSG…ELDVNYYPEL (92 aa)). Residues Cys37, Cys42, Cys45, and Cys75 each contribute to the [2Fe-2S] cluster site. In terms of domain architecture, FAD-binding FR-type spans 98–197 (KKTYPCKLDS…EGPQGTFFVR (100 aa)).

In terms of assembly, monomer.

Its pathway is nucleotide-sugar biosynthesis; CDP-ascarylose biosynthesis. It functions in the pathway bacterial outer membrane biogenesis; lipopolysaccharide biosynthesis. Participates in the conversion of CDP-6-deoxy-D-glycero-L-threo-4-hexulose to 3,6-dideoxy-D-glycero-D-glycero-4-hexulose together with CDP-6-deoxy-D-glycero-L-threo-4-hexulose-3-dehydrase (E1) in two consecutive steps. The detailed mechanism of E3 is not yet resolved. This is CDP-6-deoxy-L-threo-D-glycero-4-hexulose-3-dehydrase reductase (ascD) from Yersinia pestis.